The sequence spans 464 residues: Serine carboxypeptidase-like 22 (464 aa).

An N-terminal signal peptide occupies residues 1 to 22 (MARTHLLFLLFVLLSLATSSTS). N-linked (GlcNAc...) asparagine glycans are attached at residues N52, N113, and N137. Intrachain disulfides connect C86/C346, C247/C258, and C282/C314. The active site involves S179. N-linked (GlcNAc...) asparagine glycosylation is found at N290 and N335. Residues D385 and H437 contribute to the active site.

This sequence belongs to the peptidase S10 family. As to expression, expression not detected.

It is found in the secreted. Functionally, probable carboxypeptidase. The protein is Serine carboxypeptidase-like 22 (SCPL22) of Arabidopsis thaliana (Mouse-ear cress).